Consider the following 272-residue polypeptide: Undecaprenyl-diphosphatase (272 aa).

The next 8 membrane-spanning stretches (helical) occupy residues 2–22 (LELI…WLPI), 50–70 (VIQL…LFPF), 83–103 (FSLW…GVPF), 110–130 (LFYN…LFII), 148–168 (LGYK…IPGT), 195–215 (LAIP…GFAF), 220–240 (LIIL…AIKF), and 250–270 (FKAF…YFLA).

This sequence belongs to the UppP family.

It localises to the cell membrane. The catalysed reaction is di-trans,octa-cis-undecaprenyl diphosphate + H2O = di-trans,octa-cis-undecaprenyl phosphate + phosphate + H(+). Its function is as follows. Catalyzes the dephosphorylation of undecaprenyl diphosphate (UPP). Confers resistance to bacitracin. In Acetivibrio thermocellus (strain ATCC 27405 / DSM 1237 / JCM 9322 / NBRC 103400 / NCIMB 10682 / NRRL B-4536 / VPI 7372) (Clostridium thermocellum), this protein is Undecaprenyl-diphosphatase.